The sequence spans 152 residues: Transcriptional regulator MraZ (152 aa).

SpoVT-AbrB domains follow at residues 5–52 (ASAI…PLQE) and 81–124 (AHEC…DEAA).

The protein belongs to the MraZ family. In terms of assembly, forms oligomers.

The protein resides in the cytoplasm. Its subcellular location is the nucleoid. The protein is Transcriptional regulator MraZ of Shewanella denitrificans (strain OS217 / ATCC BAA-1090 / DSM 15013).